Here is a 216-residue protein sequence, read N- to C-terminus: Probable flavin-dependent thymidylate synthase (216 aa).

In terms of domain architecture, ThyX spans 1–216; that stretch reads MSAKLISVTK…PSIAKALDWV (216 aa). FAD contacts are provided by residues serine 55, 78 to 80, and glutamate 86; that span reads RHR. DUMP-binding positions include 75–78, 86–90, and arginine 155; these read QVLR and EFSQR. The short motif at 78-88 is the ThyX motif element; it reads RHRSFHFQEFS. Residue histidine 177 coordinates FAD. Arginine 182 serves as a coordination point for dUMP. The active-site Involved in ionization of N3 of dUMP, leading to its activation is the arginine 182.

Belongs to the thymidylate synthase ThyX family. As to quaternary structure, homotetramer. The cofactor is FAD.

The enzyme catalyses dUMP + (6R)-5,10-methylene-5,6,7,8-tetrahydrofolate + NADPH + H(+) = dTMP + (6S)-5,6,7,8-tetrahydrofolate + NADP(+). It participates in pyrimidine metabolism; dTTP biosynthesis. In terms of biological role, catalyzes the reductive methylation of 2'-deoxyuridine-5'-monophosphate (dUMP) to 2'-deoxythymidine-5'-monophosphate (dTMP) while utilizing 5,10-methylenetetrahydrofolate (mTHF) as the methyl donor, and NADPH and FADH(2) as the reductant. In Paramecium bursaria Chlorella virus 1 (PBCV-1), this protein is Probable flavin-dependent thymidylate synthase.